Consider the following 124-residue polypeptide: Glucagon-1 (124 aa).

The signal sequence occupies residues 1 to 25 (MKRIHSLAGILLVLGLIQSSCRVLM). The segment at 28-54 (ADPSSSLEADSTLKDEPRELSNMKRHS) is disordered. A compositionally biased stretch (basic and acidic residues) spans 38 to 54 (STLKDEPRELSNMKRHS). Positions 84–88 (SGVAE) are excised as a propeptide.

Belongs to the glucagon family.

The protein localises to the secreted. Functionally, glucagon plays a key role in glucose metabolism and homeostasis. Regulates blood glucose by increasing gluconeogenesis and decreasing glycolysis. In Lophius americanus (American angler), this protein is Glucagon-1 (gcg1).